The following is a 170-amino-acid chain: ATP synthase subunit b (170 aa).

A helical membrane pass occupies residues 11–31 (AFTFGDAFFTLFAFAILLVLI).

The protein belongs to the ATPase B chain family. In terms of assembly, F-type ATPases have 2 components, F(1) - the catalytic core - and F(0) - the membrane proton channel. F(1) has five subunits: alpha(3), beta(3), gamma(1), delta(1), epsilon(1). F(0) has three main subunits: a(1), b(2) and c(10-14). The alpha and beta chains form an alternating ring which encloses part of the gamma chain. F(1) is attached to F(0) by a central stalk formed by the gamma and epsilon chains, while a peripheral stalk is formed by the delta and b chains.

The protein resides in the cell membrane. Its function is as follows. F(1)F(0) ATP synthase produces ATP from ADP in the presence of a proton or sodium gradient. F-type ATPases consist of two structural domains, F(1) containing the extramembraneous catalytic core and F(0) containing the membrane proton channel, linked together by a central stalk and a peripheral stalk. During catalysis, ATP synthesis in the catalytic domain of F(1) is coupled via a rotary mechanism of the central stalk subunits to proton translocation. Functionally, component of the F(0) channel, it forms part of the peripheral stalk, linking F(1) to F(0). The polypeptide is ATP synthase subunit b (Listeria monocytogenes serotype 4b (strain F2365)).